The following is a 276-amino-acid chain: Lyso-ornithine lipid O-acyltransferase (276 aa).

The helical transmembrane segment at 25–47 (LALRGGAMALVLMAGLTLHLAVR) threads the bilayer.

This sequence belongs to the 1-acyl-sn-glycerol-3-phosphate acyltransferase family. OlsA subfamily.

The protein localises to the membrane. It catalyses the reaction a lyso-ornithine lipid + a fatty acyl-[ACP] = an N(2)-[(3R)-3-(acyloxy)acyl]-L-ornithine lipid + holo-[ACP]. The enzyme catalyses a fatty acyl-[ACP] + a 1-acyl-sn-glycero-3-phosphate = a 1,2-diacyl-sn-glycero-3-phosphate + holo-[ACP]. The protein operates within lipid metabolism. It functions in the pathway phospholipid metabolism. In terms of biological role, catalyzes the second step in the formation of ornithine lipids, which are phosphorus-free membrane lipids. Uses acyl-acyl carrier protein (acyl-AcpP) as an acyl donor and converts lyso-ornithine lipid (LOL) into ornithine lipid (OL). It can also act as an alternate acyl-sn-glycerol-3-phosphate acyltransferase (AGPAT) to ensure glycerophospholipid production. This is Lyso-ornithine lipid O-acyltransferase from Rhodobacter capsulatus (strain ATCC BAA-309 / NBRC 16581 / SB1003).